Here is a 440-residue protein sequence, read N- to C-terminus: GTPase Obg (440 aa).

The Obg domain maps to 5 to 163; the sequence is STFVDQTKIE…RTLRLELKVL (159 aa). The OBG-type G domain occupies 164 to 338; the sequence is ADVGLVGFPS…LMSRAADLVS (175 aa). Residues 170-177, 195-199, 217-220, 288-291, and 319-321 each bind GTP; these read GFPSVGKS, FTTLK, DLPG, SQMD, and SSV. Mg(2+) contacts are provided by Ser177 and Thr197. An OCT domain is found at 362-440; the sequence is YHRPEKMEFT…IGDFSFEFVQ (79 aa).

The protein belongs to the TRAFAC class OBG-HflX-like GTPase superfamily. OBG GTPase family. In terms of assembly, monomer. The cofactor is Mg(2+).

The protein resides in the cytoplasm. An essential GTPase which binds GTP, GDP and possibly (p)ppGpp with moderate affinity, with high nucleotide exchange rates and a fairly low GTP hydrolysis rate. Plays a role in control of the cell cycle, stress response, ribosome biogenesis and in those bacteria that undergo differentiation, in morphogenesis control. The polypeptide is GTPase Obg (Lactobacillus delbrueckii subsp. bulgaricus (strain ATCC 11842 / DSM 20081 / BCRC 10696 / JCM 1002 / NBRC 13953 / NCIMB 11778 / NCTC 12712 / WDCM 00102 / Lb 14)).